A 442-amino-acid chain; its full sequence is D-serine dehydratase (442 aa).

Residue lysine 118 is modified to N6-(pyridoxal phosphate)lysine.

Belongs to the serine/threonine dehydratase family. DsdA subfamily. As to quaternary structure, monomer. Pyridoxal 5'-phosphate serves as cofactor.

It catalyses the reaction D-serine = pyruvate + NH4(+). The polypeptide is D-serine dehydratase (Escherichia coli O81 (strain ED1a)).